The sequence spans 193 residues: Dual-action ribosomal maturation protein DarP (193 aa).

Positions 1-10 (MRGRDEDTGE) are enriched in basic and acidic residues. Disordered stretches follow at residues 1–20 (MRGRDEDTGEFRGASRSQQR) and 170–193 (SQKPGLESGDAGLEDEESASENDE). A compositionally biased stretch (acidic residues) spans 181–193 (GLEDEESASENDE).

The protein belongs to the DarP family.

The protein resides in the cytoplasm. Functionally, member of a network of 50S ribosomal subunit biogenesis factors which assembles along the 30S-50S interface, preventing incorrect 23S rRNA structures from forming. Promotes peptidyl transferase center (PTC) maturation. This Xanthomonas campestris pv. campestris (strain 8004) protein is Dual-action ribosomal maturation protein DarP.